The sequence spans 389 residues: Jasmonate O-methyltransferase (389 aa).

Position 18 (Tyr-18) interacts with S-adenosyl-L-homocysteine. Position 25 (Gln-25) interacts with jasmonate. Residues Cys-60, Asn-65, Asp-97, Leu-98, Ser-142, and Phe-143 each contribute to the S-adenosyl-L-homocysteine site. Jasmonate-binding residues include His-163 and Trp-164. 4 residues coordinate Mg(2+): Asn-186, Asp-272, Phe-274, and Asn-275.

This sequence belongs to the methyltransferase superfamily. Type-7 methyltransferase family. It depends on Mg(2+) as a cofactor. Expressed in rosettes, cauline leaves and developing flowers but not in young seedlings.

Its subcellular location is the cytoplasm. The protein resides in the nucleus. The catalysed reaction is jasmonate + S-adenosyl-L-methionine = methyl (-)-jasmonate + S-adenosyl-L-homocysteine. Its pathway is lipid metabolism; oxylipin biosynthesis. Its function is as follows. Catalyzes the methylation of jasmonate into methyljasmonate, a plant volatile that acts as an important cellular regulator mediating diverse developmental processes and defense responses. The protein is Jasmonate O-methyltransferase of Arabidopsis thaliana (Mouse-ear cress).